A 448-amino-acid chain; its full sequence is Glutamyl-tRNA reductase (448 aa).

Substrate is bound by residues 48-51 (TCNR), S100, 105-107 (EDQ), and Q111. The active-site Nucleophile is C49. Residue 180–185 (GAGEIG) participates in NADP(+) binding.

This sequence belongs to the glutamyl-tRNA reductase family. In terms of assembly, homodimer.

It carries out the reaction (S)-4-amino-5-oxopentanoate + tRNA(Glu) + NADP(+) = L-glutamyl-tRNA(Glu) + NADPH + H(+). Its pathway is porphyrin-containing compound metabolism; protoporphyrin-IX biosynthesis; 5-aminolevulinate from L-glutamyl-tRNA(Glu): step 1/2. Catalyzes the NADPH-dependent reduction of glutamyl-tRNA(Glu) to glutamate 1-semialdehyde (GSA). The sequence is that of Glutamyl-tRNA reductase from Methanosarcina mazei (strain ATCC BAA-159 / DSM 3647 / Goe1 / Go1 / JCM 11833 / OCM 88) (Methanosarcina frisia).